A 247-amino-acid polypeptide reads, in one-letter code: Leucyl/phenylalanyl-tRNA--protein transferase (247 aa).

It belongs to the L/F-transferase family.

It localises to the cytoplasm. The catalysed reaction is N-terminal L-lysyl-[protein] + L-leucyl-tRNA(Leu) = N-terminal L-leucyl-L-lysyl-[protein] + tRNA(Leu) + H(+). The enzyme catalyses N-terminal L-arginyl-[protein] + L-leucyl-tRNA(Leu) = N-terminal L-leucyl-L-arginyl-[protein] + tRNA(Leu) + H(+). It carries out the reaction L-phenylalanyl-tRNA(Phe) + an N-terminal L-alpha-aminoacyl-[protein] = an N-terminal L-phenylalanyl-L-alpha-aminoacyl-[protein] + tRNA(Phe). Functions in the N-end rule pathway of protein degradation where it conjugates Leu, Phe and, less efficiently, Met from aminoacyl-tRNAs to the N-termini of proteins containing an N-terminal arginine or lysine. The chain is Leucyl/phenylalanyl-tRNA--protein transferase from Solidesulfovibrio magneticus (strain ATCC 700980 / DSM 13731 / RS-1) (Desulfovibrio magneticus).